Here is a 431-residue protein sequence, read N- to C-terminus: Glutamate-1-semialdehyde 2,1-aminomutase (431 aa).

Position 265 is an N6-(pyridoxal phosphate)lysine (lysine 265).

The protein belongs to the class-III pyridoxal-phosphate-dependent aminotransferase family. HemL subfamily. In terms of assembly, homodimer. Pyridoxal 5'-phosphate serves as cofactor.

The protein localises to the cytoplasm. It catalyses the reaction (S)-4-amino-5-oxopentanoate = 5-aminolevulinate. Its pathway is porphyrin-containing compound metabolism; protoporphyrin-IX biosynthesis; 5-aminolevulinate from L-glutamyl-tRNA(Glu): step 2/2. The sequence is that of Glutamate-1-semialdehyde 2,1-aminomutase from Vibrio atlanticus (strain LGP32) (Vibrio splendidus (strain Mel32)).